We begin with the raw amino-acid sequence, 496 residues long: uncharacterized protein (496 aa).

Transmembrane regions (helical) follow at residues 33–53 (FLKG…LIFA), 89–109 (LNFL…YTLI), 127–147 (PWFV…FTFF), 154–174 (VFNL…YEIF), 193–213 (LIIA…TPLV), 247–267 (IILI…NTNF), 285–305 (LWFI…VFAY), 320–340 (LWVY…YMVF), 355–375 (LLNL…VTLF), 382–402 (SLIN…IYIF), 411–431 (LLVL…IVGF), and 455–475 (VQIM…YLTI).

The protein resides in the cell membrane. This is an uncharacterized protein from Ureaplasma parvum serovar 3 (strain ATCC 700970).